Reading from the N-terminus, the 450-residue chain is Phosphoglucosamine mutase (450 aa).

The Phosphoserine intermediate role is filled by S103. Mg(2+)-binding residues include S103, D243, D245, and D247. S103 is modified (phosphoserine).

This sequence belongs to the phosphohexose mutase family. Mg(2+) serves as cofactor. Post-translationally, activated by phosphorylation.

The catalysed reaction is alpha-D-glucosamine 1-phosphate = D-glucosamine 6-phosphate. In terms of biological role, catalyzes the conversion of glucosamine-6-phosphate to glucosamine-1-phosphate. The protein is Phosphoglucosamine mutase of Lactobacillus delbrueckii subsp. bulgaricus (strain ATCC 11842 / DSM 20081 / BCRC 10696 / JCM 1002 / NBRC 13953 / NCIMB 11778 / NCTC 12712 / WDCM 00102 / Lb 14).